Reading from the N-terminus, the 65-residue chain is Large ribosomal subunit protein bL32 (65 aa).

Belongs to the bacterial ribosomal protein bL32 family.

The polypeptide is Large ribosomal subunit protein bL32 (rpmF) (Rickettsia prowazekii (strain Madrid E)).